The sequence spans 475 residues: Vasculin-like protein 1 (475 aa).

2 positions are modified to phosphoserine: S49 and S76. 2 disordered regions span residues 92 to 115 and 160 to 191; these read NLSG…GSTG and PSLN…SAKQ. S202 is modified (phosphoserine). Disordered regions lie at residues 237–271 and 292–318; these read LVPK…EAAL and PKES…RRTT. Positions 294–311 are enriched in low complexity; it reads ESPSSTTPPIEISSSRLT. T300 carries the phosphothreonine modification. At S383 the chain carries Phosphoserine. Residues 456–475 are disordered; that stretch reads CEDSDTETSSSETSDDDAWK.

The protein belongs to the vasculin family.

Its subcellular location is the nucleus. Functionally, possible transcription factor. This chain is Vasculin-like protein 1 (Gpbp1l1), found in Rattus norvegicus (Rat).